Here is a 363-residue protein sequence, read N- to C-terminus: Putative lipoate-protein ligase A (363 aa).

The BPL/LPL catalytic domain maps to 49–229 (STAKHCLLLY…CFLLHKSHST (181 aa)). ATP is bound by residues Arg-91, 96–99 (GTVF), and Lys-152. Lys-152 is a binding site for (R)-lipoate.

This sequence belongs to the LplA family. Monomer.

It localises to the cytoplasm. The enzyme catalyses L-lysyl-[lipoyl-carrier protein] + (R)-lipoate + ATP = N(6)-[(R)-lipoyl]-L-lysyl-[lipoyl-carrier protein] + AMP + diphosphate + H(+). Its pathway is protein modification; protein lipoylation via exogenous pathway; protein N(6)-(lipoyl)lysine from lipoate: step 1/2. It participates in protein modification; protein lipoylation via exogenous pathway; protein N(6)-(lipoyl)lysine from lipoate: step 2/2. Functionally, catalyzes both the ATP-dependent activation of exogenously supplied lipoate to lipoyl-AMP and the transfer of the activated lipoyl onto the lipoyl domains of lipoate-dependent enzymes. The polypeptide is Putative lipoate-protein ligase A (aim22) (Schizosaccharomyces pombe (strain 972 / ATCC 24843) (Fission yeast)).